Here is a 392-residue protein sequence, read N- to C-terminus: Formate-dependent phosphoribosylglycinamide formyltransferase (392 aa).

Residues 22–23 and Glu82 contribute to the N(1)-(5-phospho-beta-D-ribosyl)glycinamide site; that span reads EL. Residues Arg114, Lys155, 160-165, 195-198, and Glu203 each bind ATP; these read SSGKGQ and EGVV. In terms of domain architecture, ATP-grasp spans 119–308; it reads RLAAEELGLP…EFALHVRAFL (190 aa). Glu267 and Glu279 together coordinate Mg(2+). N(1)-(5-phospho-beta-D-ribosyl)glycinamide-binding positions include Asp286, Lys355, and 362 to 363; that span reads RR.

This sequence belongs to the PurK/PurT family. Homodimer.

It catalyses the reaction N(1)-(5-phospho-beta-D-ribosyl)glycinamide + formate + ATP = N(2)-formyl-N(1)-(5-phospho-beta-D-ribosyl)glycinamide + ADP + phosphate + H(+). It functions in the pathway purine metabolism; IMP biosynthesis via de novo pathway; N(2)-formyl-N(1)-(5-phospho-D-ribosyl)glycinamide from N(1)-(5-phospho-D-ribosyl)glycinamide (formate route): step 1/1. Its function is as follows. Involved in the de novo purine biosynthesis. Catalyzes the transfer of formate to 5-phospho-ribosyl-glycinamide (GAR), producing 5-phospho-ribosyl-N-formylglycinamide (FGAR). Formate is provided by PurU via hydrolysis of 10-formyl-tetrahydrofolate. This chain is Formate-dependent phosphoribosylglycinamide formyltransferase, found in Salmonella schwarzengrund (strain CVM19633).